Reading from the N-terminus, the 503-residue chain is MVSIRPDEISSIIRQQIESYDQQVQVSNVGTVLQVGDGTARIYGLQQAMAQELLEFEDGTIGIALNLEEDNVGAVLMGSGYGIQEGSTVKATGRIAQVPVGEALVSRIVDALGRPIDGKGPINTNETRLLESPAPGIVARKSVCEPMQTGITAIDAMIPVGRGQRELIIGDRKTGKTAIAIDTIINQKGEDVICVYVAIGQKASTVAQVVDTLTEKGAMDYTVVVSASANDPATLQYLAPYTGATIAEYFMYKGKATLVIYDDLSKQAQAYRQISLLMRRPPGREAYPGDVFYLHSRLLERAAKLNDQLGGGSMTALPIIETQAGDVSAYIPTNVISITDGQIFLSSDLFNAGFRPAINAGISVSRVGSAAQTKAMKQVAGKLKLELAQFAELEAFSQFASDLDAATQAQLARGQRLREVLKQPQNSPLAVWEQVAIVYAGLNGYLDDIPPAQVTTFTQGLRDYLRNSKPKFPEIVGNEKKLTDEAESLLKEAIGEFKQGFTA.

Residue 170-177 (GDRKTGKT) coordinates ATP.

It belongs to the ATPase alpha/beta chains family. F-type ATPases have 2 components, CF(1) - the catalytic core - and CF(0) - the membrane proton channel. CF(1) has five subunits: alpha(3), beta(3), gamma(1), delta(1), epsilon(1). CF(0) has four main subunits: a, b, b' and c.

It localises to the cellular thylakoid membrane. The catalysed reaction is ATP + H2O + 4 H(+)(in) = ADP + phosphate + 5 H(+)(out). Functionally, produces ATP from ADP in the presence of a proton gradient across the membrane. The alpha chain is a regulatory subunit. The polypeptide is ATP synthase subunit alpha (Gloeothece citriformis (strain PCC 7424) (Cyanothece sp. (strain PCC 7424))).